A 971-amino-acid chain; its full sequence is Polyamine-modulated factor 1-binding protein 1 (971 aa).

Coiled-coil stretches lie at residues 37 to 69 (NKQY…LQAS), 117 to 229 (EKLH…ACSN), 282 to 325 (LHVE…LREE), 355 to 680 (QKLS…SAIQ), 706 to 827 (QDDL…DEKE), and 879 to 916 (IAKL…KAGT).

Expressed in testis and more specifically in ODF, the sperm tail specific cytoskeletal structure. Also expressed in epididymides and brain.

It localises to the cell projection. Its subcellular location is the cilium. The protein localises to the flagellum. In terms of biological role, required for normal spermatogenesis. It functions as a scaffold protein that attaches the sperm head-tail connecting piece to the nuclear envelope, thus maintaining sperm head and tail integrity. May also be involved in the general organization of cellular cytoskeleton. This Rattus norvegicus (Rat) protein is Polyamine-modulated factor 1-binding protein 1 (Pmfbp1).